The following is a 735-amino-acid chain: DNA ligase 1 (735 aa).

Over residues Met1–Ala11 the composition is skewed to basic and acidic residues. The segment at Met1–Arg23 is disordered. NAD(+)-binding positions include Asp48–Asp52, Ser97–Leu98, and Glu128. Lys130 functions as the N6-AMP-lysine intermediate in the catalytic mechanism. Residues Arg151, Glu188, Lys305, and Lys329 each contribute to the NAD(+) site. Residues Cys423, Cys426, Cys442, and Cys448 each coordinate Zn(2+). The BRCT domain occupies Glu643–Ser732.

The protein belongs to the NAD-dependent DNA ligase family. LigA subfamily. Mg(2+) serves as cofactor. Requires Mn(2+) as cofactor.

The catalysed reaction is NAD(+) + (deoxyribonucleotide)n-3'-hydroxyl + 5'-phospho-(deoxyribonucleotide)m = (deoxyribonucleotide)n+m + AMP + beta-nicotinamide D-nucleotide.. Its function is as follows. DNA ligase that catalyzes the formation of phosphodiester linkages between 5'-phosphoryl and 3'-hydroxyl groups in double-stranded DNA using NAD as a coenzyme and as the energy source for the reaction. It is essential for DNA replication and repair of damaged DNA. This chain is DNA ligase 1, found in Streptomyces coelicolor (strain ATCC BAA-471 / A3(2) / M145).